We begin with the raw amino-acid sequence, 78 residues long: Acyl carrier protein (78 aa).

One can recognise a Carrier domain in the interval 1 to 75 (MIKEKILSIV…DLISVVKNST (75 aa)). O-(pantetheine 4'-phosphoryl)serine is present on Ser35.

This sequence belongs to the acyl carrier protein (ACP) family. Post-translationally, 4'-phosphopantetheine is transferred from CoA to a specific serine of apo-ACP by AcpS. This modification is essential for activity because fatty acids are bound in thioester linkage to the sulfhydryl of the prosthetic group.

The protein localises to the cytoplasm. It participates in lipid metabolism; fatty acid biosynthesis. Carrier of the growing fatty acid chain in fatty acid biosynthesis. This chain is Acyl carrier protein (acpP), found in Shigella flexneri.